The primary structure comprises 282 residues: Lipoyl synthase (282 aa).

[4Fe-4S] cluster is bound by residues cysteine 37, cysteine 42, cysteine 48, cysteine 63, cysteine 67, cysteine 70, and serine 275. The region spanning 49–264 (WSRGTATFMI…RLVGIEKGFR (216 aa)) is the Radical SAM core domain.

It belongs to the radical SAM superfamily. Lipoyl synthase family. [4Fe-4S] cluster serves as cofactor.

Its subcellular location is the cytoplasm. The catalysed reaction is [[Fe-S] cluster scaffold protein carrying a second [4Fe-4S](2+) cluster] + N(6)-octanoyl-L-lysyl-[protein] + 2 oxidized [2Fe-2S]-[ferredoxin] + 2 S-adenosyl-L-methionine + 4 H(+) = [[Fe-S] cluster scaffold protein] + N(6)-[(R)-dihydrolipoyl]-L-lysyl-[protein] + 4 Fe(3+) + 2 hydrogen sulfide + 2 5'-deoxyadenosine + 2 L-methionine + 2 reduced [2Fe-2S]-[ferredoxin]. Its pathway is protein modification; protein lipoylation via endogenous pathway; protein N(6)-(lipoyl)lysine from octanoyl-[acyl-carrier-protein]: step 2/2. Its function is as follows. Catalyzes the radical-mediated insertion of two sulfur atoms into the C-6 and C-8 positions of the octanoyl moiety bound to the lipoyl domains of lipoate-dependent enzymes, thereby converting the octanoylated domains into lipoylated derivatives. This Porphyromonas gingivalis (strain ATCC 33277 / DSM 20709 / CIP 103683 / JCM 12257 / NCTC 11834 / 2561) protein is Lipoyl synthase.